Here is a 566-residue protein sequence, read N- to C-terminus: CTP synthase (566 aa).

The amidoligase domain stretch occupies residues 1–282 (MSIKRAQLGG…DAYIIDQLGL (282 aa)). Residue Ser-23 coordinates CTP. Ser-23 contacts UTP. ATP-binding positions include 24 to 29 (SLGKGL) and Asp-81. Asp-81 and Glu-156 together coordinate Mg(2+). CTP is bound by residues 163-165 (DIE), 203-208 (KTKPTQ), and Lys-239. Residues 203–208 (KTKPTQ) and Lys-239 each bind UTP. Residues 308 to 556 (TIGLVGKYID…IGAALDRQKA (249 aa)) form the Glutamine amidotransferase type-1 domain. Residue Gly-371 coordinates L-glutamine. The active-site Nucleophile; for glutamine hydrolysis is Cys-398. Residues 399–402 (LGLQ), Glu-422, and Arg-482 each bind L-glutamine. Active-site residues include His-529 and Glu-531.

It belongs to the CTP synthase family. In terms of assembly, homotetramer.

The catalysed reaction is UTP + L-glutamine + ATP + H2O = CTP + L-glutamate + ADP + phosphate + 2 H(+). It catalyses the reaction L-glutamine + H2O = L-glutamate + NH4(+). The enzyme catalyses UTP + NH4(+) + ATP = CTP + ADP + phosphate + 2 H(+). It participates in pyrimidine metabolism; CTP biosynthesis via de novo pathway; CTP from UDP: step 2/2. Its activity is regulated as follows. Allosterically activated by GTP, when glutamine is the substrate; GTP has no effect on the reaction when ammonia is the substrate. The allosteric effector GTP functions by stabilizing the protein conformation that binds the tetrahedral intermediate(s) formed during glutamine hydrolysis. Inhibited by the product CTP, via allosteric rather than competitive inhibition. In terms of biological role, catalyzes the ATP-dependent amination of UTP to CTP with either L-glutamine or ammonia as the source of nitrogen. Regulates intracellular CTP levels through interactions with the four ribonucleotide triphosphates. The protein is CTP synthase of Leifsonia xyli subsp. xyli (strain CTCB07).